The following is a 227-amino-acid chain: Phosphoribosylformylglycinamidine synthase subunit PurQ (227 aa).

The Glutamine amidotransferase type-1 domain occupies 3-225 (FAVIVFPGSN…VKQGAHHVKT (223 aa)). C86 functions as the Nucleophile in the catalytic mechanism. Residues H194 and E196 contribute to the active site.

In terms of assembly, part of the FGAM synthase complex composed of 1 PurL, 1 PurQ and 2 PurS subunits.

Its subcellular location is the cytoplasm. It catalyses the reaction N(2)-formyl-N(1)-(5-phospho-beta-D-ribosyl)glycinamide + L-glutamine + ATP + H2O = 2-formamido-N(1)-(5-O-phospho-beta-D-ribosyl)acetamidine + L-glutamate + ADP + phosphate + H(+). The catalysed reaction is L-glutamine + H2O = L-glutamate + NH4(+). Its pathway is purine metabolism; IMP biosynthesis via de novo pathway; 5-amino-1-(5-phospho-D-ribosyl)imidazole from N(2)-formyl-N(1)-(5-phospho-D-ribosyl)glycinamide: step 1/2. In terms of biological role, part of the phosphoribosylformylglycinamidine synthase complex involved in the purines biosynthetic pathway. Catalyzes the ATP-dependent conversion of formylglycinamide ribonucleotide (FGAR) and glutamine to yield formylglycinamidine ribonucleotide (FGAM) and glutamate. The FGAM synthase complex is composed of three subunits. PurQ produces an ammonia molecule by converting glutamine to glutamate. PurL transfers the ammonia molecule to FGAR to form FGAM in an ATP-dependent manner. PurS interacts with PurQ and PurL and is thought to assist in the transfer of the ammonia molecule from PurQ to PurL. The chain is Phosphoribosylformylglycinamidine synthase subunit PurQ from Exiguobacterium sibiricum (strain DSM 17290 / CCUG 55495 / CIP 109462 / JCM 13490 / 255-15).